A 2575-amino-acid chain; its full sequence is Non-reducing polyketide synthase pks11 (2575 aa).

The Starter acyltransferase (SAT) domain maps to 89–228 (LANIILSPLV…ASKTVSTLQG (140 aa)). Cysteine 129 functions as the Nucleophile; for transacylase activity in the catalytic mechanism. Histidine 247 serves as the catalytic Proton donor/acceptor; for transacylase activity. The Ketosynthase family 3 (KS3) domain occupies 373–790 (EDDIAVVGMS…GSNASAVVTE (418 aa)). Active-site for beta-ketoacyl synthase activity residues include cysteine 538, histidine 673, and histidine 713. The 292-residue stretch at 901-1192 (FGGQISTYVG…TNMASRALGS (292 aa)) folds into the Malonyl-CoA:ACP transacylase (MAT) domain. The N-terminal hotdog fold stretch occupies residues 1276–1409 (PKGLWSFIDY…GQIIFVSTDN (134 aa)). The 311-residue stretch at 1276–1586 (PKGLWSFIDY…YHKVAKATMS (311 aa)) folds into the PKS/mFAS DH domain. Positions 1307–1584 (LVSGHIIAQT…VNYHKVAKAT (278 aa)) are product template (PT) domain. Histidine 1311 functions as the Proton acceptor; for dehydratase activity in the catalytic mechanism. The tract at residues 1437 to 1586 (ADDIIQGRNI…YHKVAKATMS (150 aa)) is C-terminal hotdog fold. Aspartate 1493 (proton donor; for dehydratase activity) is an active-site residue. Polar residues predominate over residues 1597 to 1606 (TTSTSTNVKS). The tract at residues 1597 to 1636 (TTSTSTNVKSSPAAAEGSSPVENGASGSGSKAKKTKSGAG) is disordered. Positions 1637 to 1711 (QDVVNKTKGL…GLVQIIKSTL (75 aa)) constitute a Carrier domain. Serine 1671 is modified (O-(pantetheine 4'-phosphoryl)serine). Residues 1713-1762 (VSDDEEGSDQEGSEASSSESSTTFTPSTTATTVSDVEDNGNEKSIGKEKS) are disordered. Residues 1714–1724 (SDDEEGSDQEG) show a composition bias toward acidic residues. The segment covering 1725–1746 (SEASSSESSTTFTPSTTATTVS) has biased composition (low complexity). A compositionally biased stretch (basic and acidic residues) spans 1752-1762 (GNEKSIGKEKS). Residues 1835 to 2130 (LTRIPHDPQH…HIDWTDGNSP (296 aa)) are methyltransferase domain. A Thioester reductase (TE) domain is found at 2204–2448 (ITGATGSLGS…LCWTPVDDVA (245 aa)).

It depends on pantetheine 4'-phosphate as a cofactor.

Its pathway is secondary metabolite biosynthesis. Functionally, non-reducing polyketide synthase; part of the gene cluster that mediates the biosynthesis of mitorubrinol and mitorubrinic acid, two virulence factors that improve T.marneffei intracellular survival in macrophages. The two polyketide synthases pks12 and pks11 are probably responsible for sequential use in the biosynthesis of mitorubrinol and mitorubrinic acid. The first part of the biosynthesis is probably catalyzed by pks12, which synthesized orsellinic acid. This tetraketide is then used as a starter unit for pks11, which possesses a SAT domain, in the second part of the biosynthesis. Pks11, contains a methyltransferase domain, also served that methylates the products, using a methyl group from S-adenosylmethionine. This is Non-reducing polyketide synthase pks11 from Talaromyces marneffei (Penicillium marneffei).